A 257-amino-acid chain; its full sequence is Ribonuclease HII (257 aa).

Residues 72–257 (TYIAGIDEVG…FAPIKDMIQK (186 aa)) enclose the RNase H type-2 domain. Residues Asp-78, Glu-79, and Asp-170 each contribute to the a divalent metal cation site.

This sequence belongs to the RNase HII family. It depends on Mn(2+) as a cofactor. Mg(2+) serves as cofactor.

The protein resides in the cytoplasm. It carries out the reaction Endonucleolytic cleavage to 5'-phosphomonoester.. In terms of biological role, endonuclease that specifically degrades the RNA of RNA-DNA hybrids. The protein is Ribonuclease HII of Bacillus mycoides (strain KBAB4) (Bacillus weihenstephanensis).